Here is a 358-residue protein sequence, read N- to C-terminus: MLFKEAQAFIENMYKECHYETQIINKRLHDIELEIKETGTYTHTEEELIYGAKMAWRNSNRCIGRLFWDSLNVIDARDVTDEASFLSSINYHIAQATNEGKLKPYITIYAPKDGPKIFNNQLIRYAGYDNCGDPAEKEVTRLANHLGWKGKGTNFDVLPLIYQLPNESVKYYEYPTSLIKEVPIEHDHYPKLRKLNLKWYAVPIISNMDLKIGGIVYPTAPFNGWYMVTEIGVRNFIDDYRYNLLEKVADAFEFDTLKNNSFNKDRALVELNYAVYHSFKKEGVSIVDHLTAAKQFELFERNEAQQGRQVTGKWSWLAPPLSPTLTSNYHHGYDNTVKDPNFFYKKKKSNANQCPFHH.

Cysteine 62 is a binding site for heme.

This sequence belongs to the NOS family. Bacterial NOS oxygenase subfamily. In terms of assembly, homodimer. Heme serves as cofactor. Requires (6S)-5,6,7,8-tetrahydrofolate as cofactor.

The enzyme catalyses 3 reduced [flavodoxin] + 2 L-arginine + 4 O2 = 3 oxidized [flavodoxin] + 2 L-citrulline + 2 nitric oxide + 4 H2O + 5 H(+). In terms of biological role, catalyzes the production of nitric oxide. The protein is Nitric oxide synthase oxygenase (nos) of Staphylococcus aureus (strain MRSA252).